A 417-amino-acid polypeptide reads, in one-letter code: Histidine--tRNA ligase (417 aa).

This sequence belongs to the class-II aminoacyl-tRNA synthetase family. In terms of assembly, homodimer.

It is found in the cytoplasm. The catalysed reaction is tRNA(His) + L-histidine + ATP = L-histidyl-tRNA(His) + AMP + diphosphate + H(+). This chain is Histidine--tRNA ligase, found in Acetivibrio thermocellus (strain ATCC 27405 / DSM 1237 / JCM 9322 / NBRC 103400 / NCIMB 10682 / NRRL B-4536 / VPI 7372) (Clostridium thermocellum).